A 446-amino-acid polypeptide reads, in one-letter code: NADP-specific glutamate dehydrogenase (446 aa).

Residues Lys-92, Gln-113, and Lys-116 each coordinate substrate. The Proton donor role is filled by Lys-128. Gly-167 lines the substrate pocket. Positions 211 and 242 each coordinate NADP(+). A substrate-binding site is contributed by Ser-379.

Belongs to the Glu/Leu/Phe/Val dehydrogenases family. Homohexamer.

The catalysed reaction is L-glutamate + NADP(+) + H2O = 2-oxoglutarate + NH4(+) + NADPH + H(+). Its function is as follows. Catalyzes the reversible oxidative deamination of glutamate to a-ketoglutarate and ammonia. The sequence is that of NADP-specific glutamate dehydrogenase (gdhA) from Unknown prokaryotic organism.